Here is a 205-residue protein sequence, read N- to C-terminus: High frequency lysogenization protein HflD homolog (205 aa).

It belongs to the HflD family.

The protein localises to the cytoplasm. It is found in the cell inner membrane. This Vibrio parahaemolyticus serotype O3:K6 (strain RIMD 2210633) protein is High frequency lysogenization protein HflD homolog.